The chain runs to 368 residues: S-adenosylmethionine decarboxylase proenzyme 1 (368 aa).

Residues glutamate 9 and arginine 12 contribute to the active site. Serine 69 functions as the Schiff-base intermediate with substrate; via pyruvic acid in the catalytic mechanism. At serine 69 the chain carries Pyruvic acid (Ser); by autocatalysis. Cysteine 83 (proton donor; for catalytic activity) is an active-site residue. Residues serine 234 and histidine 247 each act as proton acceptor; for processing activity in the active site.

This sequence belongs to the eukaryotic AdoMetDC family. The cofactor is pyruvate. Post-translationally, is synthesized initially as an inactive proenzyme. Formation of the active enzyme involves a self-maturation process in which the active site pyruvoyl group is generated from an internal serine residue via an autocatalytic post-translational modification. Two non-identical subunits are generated from the proenzyme in this reaction, and the pyruvate is formed at the N-terminus of the alpha chain, which is derived from the carboxyl end of the proenzyme. The post-translation cleavage follows an unusual pathway, termed non-hydrolytic serinolysis, in which the side chain hydroxyl group of the serine supplies its oxygen atom to form the C-terminus of the beta chain, while the remainder of the serine residue undergoes an oxidative deamination to produce ammonia and the pyruvoyl group blocking the N-terminus of the alpha chain.

It carries out the reaction S-adenosyl-L-methionine + H(+) = S-adenosyl 3-(methylsulfanyl)propylamine + CO2. It functions in the pathway amine and polyamine biosynthesis; S-adenosylmethioninamine biosynthesis; S-adenosylmethioninamine from S-adenosyl-L-methionine: step 1/1. This Brassica juncea (Indian mustard) protein is S-adenosylmethionine decarboxylase proenzyme 1 (SAMDC1).